A 316-amino-acid chain; its full sequence is Mannose-6-phosphate isomerase (316 aa).

Zn(2+)-binding residues include Q95, H97, E114, and H171. R191 is a catalytic residue.

This sequence belongs to the mannose-6-phosphate isomerase type 1 family. Requires Zn(2+) as cofactor.

The enzyme catalyses D-mannose 6-phosphate = D-fructose 6-phosphate. This chain is Mannose-6-phosphate isomerase (pmi), found in Streptococcus mutans serotype c (strain ATCC 700610 / UA159).